Reading from the N-terminus, the 678-residue chain is Sulfoquinovosidase (678 aa).

A 6-sulfo-alpha-D-quinovosyldiacylglycerol is bound by residues Q288, R301, V302, and W304. The Nucleophile role is filled by D405. Residue E408 is part of the active site. The active-site Proton donor is the D472. H537 contacts a 6-sulfo-alpha-D-quinovosyldiacylglycerol.

It belongs to the glycosyl hydrolase 31 family.

The enzyme catalyses a 6-sulfo-alpha-D-quinovosyldiacylglycerol + H2O = 6-sulfo-alpha-D-quinovose + a 1,2-diacyl-sn-glycerol. It carries out the reaction 3-(6-sulfo-alpha-D-quinovosyl)glycerol + H2O = 6-sulfo-alpha-D-quinovose + glycerol. It functions in the pathway glycolipid metabolism. Is inactivated in vitro by the mechanism-based inactivator 5-fluoro-beta-L-idopyranosyl fluoride (5FIdoF) that yields a covalent glycosyl-enzyme complex with the active site nucleophile Asp-405. Its function is as follows. Catalyzes the hydrolysis of sulfoquinovosyl diacylglycerides (SQDG) to sulfoquinovose (SQ), which is then degraded by E.coli through the SQ Embden-Meyerhof-Parnas (SQ-EMP) sulfoglycolysis pathway as a source of carbon and sulfur. Therefore, is likely involved in the utilization of the sulfoquinovose headgroup found in ubiquitous plant sulfolipids. Is also able to hydrolyze simple sulfoquinovosides such as sulfoquinovosyl glycerol (SQGro). In vitro, can use the substrate analog para-nitrophenyl alpha-sulfoquinovoside (PNPSQ), but shows no detectable activity toward 4-nitrophenyl alpha-D-glucopyranoside (PNPGlc). Is a retaining glycoside hydrolase, since it forms the alpha anomer of SQ. Also exhibits some alpha-glucosidase activity against alpha-glucosyl fluoride in vitro, although natural substrates, such as alpha-glucobioses are scarcely hydrolyzed. The chain is Sulfoquinovosidase from Escherichia coli (strain K12).